Consider the following 126-residue polypeptide: Phosphoribosyl-ATP pyrophosphatase (126 aa).

The protein belongs to the PRA-PH family.

The protein localises to the cytoplasm. It carries out the reaction 1-(5-phospho-beta-D-ribosyl)-ATP + H2O = 1-(5-phospho-beta-D-ribosyl)-5'-AMP + diphosphate + H(+). Its pathway is amino-acid biosynthesis; L-histidine biosynthesis; L-histidine from 5-phospho-alpha-D-ribose 1-diphosphate: step 2/9. In Variovorax paradoxus (strain S110), this protein is Phosphoribosyl-ATP pyrophosphatase.